Reading from the N-terminus, the 509-residue chain is ATP synthase subunit alpha (509 aa).

Residue 169–176 participates in ATP binding; sequence GDRQTGKT.

Belongs to the ATPase alpha/beta chains family. In terms of assembly, F-type ATPases have 2 components, CF(1) - the catalytic core - and CF(0) - the membrane proton channel. CF(1) has five subunits: alpha(3), beta(3), gamma(1), delta(1), epsilon(1). CF(0) has three main subunits: a(1), b(2) and c(9-12). The alpha and beta chains form an alternating ring which encloses part of the gamma chain. CF(1) is attached to CF(0) by a central stalk formed by the gamma and epsilon chains, while a peripheral stalk is formed by the delta and b chains.

It localises to the cell inner membrane. The enzyme catalyses ATP + H2O + 4 H(+)(in) = ADP + phosphate + 5 H(+)(out). In terms of biological role, produces ATP from ADP in the presence of a proton gradient across the membrane. The alpha chain is a regulatory subunit. The chain is ATP synthase subunit alpha from Sinorhizobium fredii (strain NBRC 101917 / NGR234).